The chain runs to 215 residues: NAD(P)H-hydrate epimerase (215 aa).

The region spanning 8–212 is the YjeF N-terminal domain; that stretch reads MYNIENKGHD…KIGIPPEAEE (205 aa). A (6S)-NADPHX-binding site is contributed by 57 to 61; sequence NNGGD. 2 residues coordinate K(+): asparagine 58 and aspartate 124. Residues 128–134, tyrosine 139, and aspartate 157 contribute to the (6S)-NADPHX site; that span reads GTGISGE. Serine 160 contributes to the K(+) binding site.

It belongs to the NnrE/AIBP family. Requires K(+) as cofactor.

The enzyme catalyses (6R)-NADHX = (6S)-NADHX. It carries out the reaction (6R)-NADPHX = (6S)-NADPHX. Its function is as follows. Catalyzes the epimerization of the S- and R-forms of NAD(P)HX, a damaged form of NAD(P)H that is a result of enzymatic or heat-dependent hydration. This is a prerequisite for the S-specific NAD(P)H-hydrate dehydratase to allow the repair of both epimers of NAD(P)HX. This Nitrosopumilus maritimus (strain SCM1) protein is NAD(P)H-hydrate epimerase.